The sequence spans 720 residues: TAL effector protein Rip19 (720 aa).

Disordered regions lie at residues 13 to 85 (SVSL…PSLV) and 175 to 205 (QAFA…PTFL). The segment covering 67–85 (PRRPLPVAPASAPPAPSLV) has biased composition (pro residues). The Nuclear localization signal 1 signature appears at 185–191 (RSARARR). A Cryptic repeat -1 repeat occupies 286-320 (LTRAHIVDIARQRSGDLALQALLPVATALTAAPLR). The Cryptic repeat 0 repeat unit spans residues 321–354 (LSASQIATVAQYGERPAIQALYRLRRKLTRAPLH). Residues 355–389 (LTPQQVVAIASHDGGKPALEAVWAKLPVLRGVPYA) form a Core repeat 1 repeat. Residues 390-423 (LSTAQVVAIACISGQQALEAIEAHMPTLRQAPHS) form a Cryptic repeat +1 repeat. The Cryptic repeat +2 repeat unit spans residues 424–457 (LSPERVAAIACIGGRSAVEAVRQGLPVKAIRRIR). 3 short sequence motifs (nuclear localization signal) span residues 455-458 (RIRR), 583-586 (HRKR), and 620-623 (RRKR). A disordered region spans residues 571-611 (SPGMAGQSACSPHRKRPAETAIAPRSIRRRPNNAGQPSEPW).

The protein belongs to the transcription activator-like effector (TALE) family. RipTAL/RTL subfamily.

It localises to the secreted. It is found in the host nucleus. Does not activate plant gene transcription, because it has too few core repeats. The sequence is that of TAL effector protein Rip19 from Ralstonia solanacearum (Pseudomonas solanacearum).